The primary structure comprises 289 residues: MASGKEIKTKIASVQSTQKITKAMEMVATSKMRKTQDRMAASRPYSETIRNVISHVSKASIGYKHPFLMEREVKTVGMLVVSTDRGMCGGLNINLFKAVLNEIKKWKEQGVTVEVGVIGAKGIAFFRSLGFKIRAQHSGIGDNPSVEELLGIANDMFDAYKEDKIDALYLAHNQFINTMSQKPSVAQLVPLPELDTDNLDERQQVWDYLYEPEPKVLLDNLLTRYLESQVYQSVVDNLASEQAARMVAMKAATDNAGNLINDLQLVYNKARQASITNELNEIVAGAAAI.

The protein belongs to the ATPase gamma chain family. F-type ATPases have 2 components, CF(1) - the catalytic core - and CF(0) - the membrane proton channel. CF(1) has five subunits: alpha(3), beta(3), gamma(1), delta(1), epsilon(1). CF(0) has three main subunits: a, b and c.

Its subcellular location is the cell inner membrane. Its function is as follows. Produces ATP from ADP in the presence of a proton gradient across the membrane. The gamma chain is believed to be important in regulating ATPase activity and the flow of protons through the CF(0) complex. This Actinobacillus succinogenes (strain ATCC 55618 / DSM 22257 / CCUG 43843 / 130Z) protein is ATP synthase gamma chain.